A 253-amino-acid polypeptide reads, in one-letter code: CD151 antigen (253 aa).

At 1–18 the chain is on the cytoplasmic side; the sequence is MGEFNEKKTTCGTVCLKY. S-palmitoyl cysteine attachment occurs at residues Cys11 and Cys15. The helical transmembrane segment at 19–39 threads the bilayer; the sequence is LLFTYNCCFWLAGLAVMAVGI. At 40–57 the chain is on the extracellular side; that stretch reads WTLALKSDYISLLASGTY. A helical transmembrane segment spans residues 58–78; sequence LATAYILVVAGTVVMVTGVLG. Residues 79–91 lie on the Cytoplasmic side of the membrane; sequence CCATFKERRNLLR. A helical transmembrane segment spans residues 92 to 112; it reads LYFILLLIIFLLEIIAGILAY. Residues 113-221 are Extracellular-facing; that stretch reads AYYQQLNTEL…LETFIQEHLR (109 aa). Asn159 carries an N-linked (GlcNAc...) asparagine glycan. Residues 222 to 242 form a helical membrane-spanning segment; sequence VIGAVGIGIACVQVFGMIFTC. Residues Cys242 and Cys243 are each lipidated (S-palmitoyl cysteine). Residues 243 to 253 lie on the Cytoplasmic side of the membrane; sequence CLYRSLKLEHY.

Belongs to the tetraspanin (TM4SF) family. In terms of assembly, interacts with integrins ITGA3:ITGB1, ITGA5:ITGB1, ITGA3:ITGB1 and ITGA6:ITGB4 and with CD9 and CD181. Interacts (via the second extracellular domain) with integrin ITGAV:ITGB3. Interacts with ITGA3; this interaction modulates ITGA3 glycosylation pattern. Interacts with F11R. Interacts with RAC1 and CDC42; these interactions mediate physical association of RAC1 and CDC42 with integrin adhesion receptor complexes. Palmitoylated. Palmitoylation by ZDHHC2 regulates CD151 expression, association with other tetraspanin family proteins and function in cell adhesion. In terms of processing, ubiquitinated by RNF128 on lysine residues present in the tetraspanin amino terminus via 'Lys-48'-linked ubiquitin leading to proteasomal degradation. In terms of tissue distribution, expressed in a variety of tissues including vascular endothelium and epidermis. Expressed on erythroid cells, with a higher level of expression in erythroid precursors than on mature erythrocytes. Acts as a sensitive T-cell activation marker.

The protein localises to the cell membrane. In terms of biological role, structural component of specialized membrane microdomains known as tetraspanin-enriched microdomains (TERMs), which act as platforms for receptor clustering and signaling. Plays a role in various cellular and molecular mechanism through its association with both integrin and non-integrin proteins. These interactions facilitate critical cellular functions, including cell-to-cell communication, wound healing, platelet aggregation, trafficking, cell motility, and angiogenesis. Via interaction with JAM-A/F11R and integrin ITGA3:ITGB1, promotes the recruitment of signaling molecules such as RAC1, CDC42 and RhoGTPases to facilitate the polarization of epithelial cells and the reorganization of the actin cytoskeleton, which are critical steps in cell migration process. Regulates the glycosylation pattern of ITGA3:ITGB1 thereby modulating its activity. Plays an essential role in the maintenance of central laminin-binding integrin ITGA6:ITGB4-containing adhesion complexes. Essential for the proper assembly of the glomerular and tubular basement membranes in kidney. Contributes to T-cell activation by modulating integrin signaling leading to activation of downstream targets PTK2 and MAPK1/MAPK3. Functionally, (Microbial infection) Plays a role in human papillomavirus 16/HPV-16 endocytosis upon binding to cell surface receptor. (Microbial infection) Plays a role in human cytomegalovirus entry into host cell by contributing to entry receptor binding, membrane fusion, or release of the capsid. The sequence is that of CD151 antigen (CD151) from Homo sapiens (Human).